Consider the following 456-residue polypeptide: Glutamate--tRNA ligase 1 (456 aa).

The 'HIGH' region signature appears at 9 to 19 (PSPTGQIHIGN). A 'KMSKS' region motif is present at residues 250–254 (GLSKR). An ATP-binding site is contributed by K253.

It belongs to the class-I aminoacyl-tRNA synthetase family. Glutamate--tRNA ligase type 1 subfamily. Monomer.

It localises to the cytoplasm. It carries out the reaction tRNA(Glu) + L-glutamate + ATP = L-glutamyl-tRNA(Glu) + AMP + diphosphate. Its function is as follows. Catalyzes the attachment of glutamate to tRNA(Glu) in a two-step reaction: glutamate is first activated by ATP to form Glu-AMP and then transferred to the acceptor end of tRNA(Glu). The protein is Glutamate--tRNA ligase 1 of Chelativorans sp. (strain BNC1).